Consider the following 317-residue polypeptide: Porphobilinogen deaminase (317 aa).

C245 is subject to S-(dipyrrolylmethanemethyl)cysteine.

The protein belongs to the HMBS family. Monomer. The cofactor is dipyrromethane.

The enzyme catalyses 4 porphobilinogen + H2O = hydroxymethylbilane + 4 NH4(+). It functions in the pathway porphyrin-containing compound metabolism; protoporphyrin-IX biosynthesis; coproporphyrinogen-III from 5-aminolevulinate: step 2/4. The protein operates within porphyrin-containing compound metabolism; chlorophyll biosynthesis. Tetrapolymerization of the monopyrrole PBG into the hydroxymethylbilane pre-uroporphyrinogen in several discrete steps. This chain is Porphobilinogen deaminase, found in Synechococcus sp. (strain RCC307).